A 219-amino-acid polypeptide reads, in one-letter code: Putative GEM-like protein 8 (219 aa).

The 79-residue stretch at 96–174 (KIYKRLFKVS…CKINGVNQSQ (79 aa)) folds into the GRAM domain.

This sequence belongs to the GEM family.

In Arabidopsis thaliana (Mouse-ear cress), this protein is Putative GEM-like protein 8.